The primary structure comprises 529 residues: Putative cysteine ligase BshC (529 aa).

A coiled-coil region spans residues 450-485 (VKQTKGLENLEKRLLKAQKRNLSDQLQRVIDLQCEL).

The protein belongs to the BshC family.

The sequence is that of Putative cysteine ligase BshC from Flavobacterium johnsoniae (strain ATCC 17061 / DSM 2064 / JCM 8514 / BCRC 14874 / CCUG 350202 / NBRC 14942 / NCIMB 11054 / UW101) (Cytophaga johnsonae).